Reading from the N-terminus, the 470-residue chain is Protein nucleotidyltransferase YdiU (470 aa).

ATP contacts are provided by Gly-86, Gly-88, Arg-89, Lys-109, Asp-121, Gly-122, Arg-172, and Arg-179. Catalysis depends on Asp-244, which acts as the Proton acceptor. Mg(2+)-binding residues include Asn-245 and Asp-254. Asp-254 contributes to the ATP binding site.

This sequence belongs to the SELO family. The cofactor is Mg(2+). Requires Mn(2+) as cofactor.

It catalyses the reaction L-seryl-[protein] + ATP = 3-O-(5'-adenylyl)-L-seryl-[protein] + diphosphate. The catalysed reaction is L-threonyl-[protein] + ATP = 3-O-(5'-adenylyl)-L-threonyl-[protein] + diphosphate. The enzyme catalyses L-tyrosyl-[protein] + ATP = O-(5'-adenylyl)-L-tyrosyl-[protein] + diphosphate. It carries out the reaction L-histidyl-[protein] + UTP = N(tele)-(5'-uridylyl)-L-histidyl-[protein] + diphosphate. It catalyses the reaction L-seryl-[protein] + UTP = O-(5'-uridylyl)-L-seryl-[protein] + diphosphate. The catalysed reaction is L-tyrosyl-[protein] + UTP = O-(5'-uridylyl)-L-tyrosyl-[protein] + diphosphate. Nucleotidyltransferase involved in the post-translational modification of proteins. It can catalyze the addition of adenosine monophosphate (AMP) or uridine monophosphate (UMP) to a protein, resulting in modifications known as AMPylation and UMPylation. The chain is Protein nucleotidyltransferase YdiU from Roseobacter denitrificans (strain ATCC 33942 / OCh 114) (Erythrobacter sp. (strain OCh 114)).